The chain runs to 86 residues: Small ribosomal subunit protein bS20 (86 aa).

It belongs to the bacterial ribosomal protein bS20 family.

Binds directly to 16S ribosomal RNA. This Pelagibacter ubique (strain HTCC1062) protein is Small ribosomal subunit protein bS20.